The primary structure comprises 354 residues: DNA polymerase IV (354 aa).

Positions 6-187 constitute a UmuC domain; that stretch reads IIHVDCDCFY…LPVARLHGVG (182 aa). Residues aspartate 10 and aspartate 105 each coordinate Mg(2+). Glutamate 106 is a catalytic residue.

Belongs to the DNA polymerase type-Y family. As to quaternary structure, monomer. Requires Mg(2+) as cofactor.

The protein resides in the cytoplasm. The catalysed reaction is DNA(n) + a 2'-deoxyribonucleoside 5'-triphosphate = DNA(n+1) + diphosphate. Poorly processive, error-prone DNA polymerase involved in untargeted mutagenesis. Copies undamaged DNA at stalled replication forks, which arise in vivo from mismatched or misaligned primer ends. These misaligned primers can be extended by PolIV. Exhibits no 3'-5' exonuclease (proofreading) activity. May be involved in translesional synthesis, in conjunction with the beta clamp from PolIII. The polypeptide is DNA polymerase IV (Pseudomonas putida (strain GB-1)).